The sequence spans 158 residues: 6,7-dimethyl-8-ribityllumazine synthase (158 aa).

Residues phenylalanine 24, 58–60 (AFE), and 82–84 (AVI) contribute to the 5-amino-6-(D-ribitylamino)uracil site. 87-88 (GT) serves as a coordination point for (2S)-2-hydroxy-3-oxobutyl phosphate. The active-site Proton donor is the histidine 90. Phenylalanine 115 lines the 5-amino-6-(D-ribitylamino)uracil pocket. Arginine 129 contributes to the (2S)-2-hydroxy-3-oxobutyl phosphate binding site.

It belongs to the DMRL synthase family. Forms an icosahedral capsid composed of 60 subunits, arranged as a dodecamer of pentamers.

The enzyme catalyses (2S)-2-hydroxy-3-oxobutyl phosphate + 5-amino-6-(D-ribitylamino)uracil = 6,7-dimethyl-8-(1-D-ribityl)lumazine + phosphate + 2 H2O + H(+). The protein operates within cofactor biosynthesis; riboflavin biosynthesis; riboflavin from 2-hydroxy-3-oxobutyl phosphate and 5-amino-6-(D-ribitylamino)uracil: step 1/2. Functionally, catalyzes the formation of 6,7-dimethyl-8-ribityllumazine by condensation of 5-amino-6-(D-ribitylamino)uracil with 3,4-dihydroxy-2-butanone 4-phosphate. This is the penultimate step in the biosynthesis of riboflavin. This Azotobacter vinelandii (strain DJ / ATCC BAA-1303) protein is 6,7-dimethyl-8-ribityllumazine synthase.